Consider the following 267-residue polypeptide: Glutamate racemase (267 aa).

Substrate-binding positions include 10-11 and 42-43; these read DS and YG. The active-site Proton donor/acceptor is the Cys73. Position 74–75 (74–75) interacts with substrate; the sequence is NT. Catalysis depends on Cys183, which acts as the Proton donor/acceptor. 184-185 serves as a coordination point for substrate; that stretch reads TH.

It belongs to the aspartate/glutamate racemases family.

The enzyme catalyses L-glutamate = D-glutamate. Its pathway is cell wall biogenesis; peptidoglycan biosynthesis. Functionally, provides the (R)-glutamate required for cell wall biosynthesis. This is Glutamate racemase from Limosilactobacillus reuteri (strain DSM 20016) (Lactobacillus reuteri).